The primary structure comprises 366 residues: Adenine DNA glycosylase (366 aa).

30-31 lines the DNA pocket; sequence WR. The active-site Proton donor/acceptor is glutamate 43. Residues 48 to 49, 86 to 88, tyrosine 126, and glutamate 188 contribute to the DNA site; these read QT and LGY. The HhH domain occupies 105 to 133; it reads RYGGKVPDDPDEFSRLKGVGPYTVGAVLS. [4Fe-4S] cluster-binding residues include cysteine 198, cysteine 205, cysteine 208, and cysteine 214. A DNA-binding site is contributed by serine 308.

This sequence belongs to the Nth/MutY family. [4Fe-4S] cluster serves as cofactor.

It catalyses the reaction Hydrolyzes free adenine bases from 7,8-dihydro-8-oxoguanine:adenine mismatched double-stranded DNA, leaving an apurinic site.. Base excision repair (BER) glycosylase that initiates repair of A:oxoG to C:G by removing the inappropriately paired adenine base from the DNA backbone, generating an abasic site product. 8-oxoguanine (oxoG) is a genotoxic DNA lesion resulting from oxidation of guanine; this residue is misread by replicative DNA polymerases, that insert adenine instead of cytosine opposite the oxidized damaged base. Shows a powerful dicrimination of A versus C, since it does not cleave cytosine in oxoG:C pairs. May also be able to remove adenine from A:G mispairs, although this activity may not be physiologically relevant. This is Adenine DNA glycosylase from Geobacillus stearothermophilus (Bacillus stearothermophilus).